The sequence spans 123 residues: Ribosome-binding factor A (123 aa).

Belongs to the RbfA family. Monomer. Binds 30S ribosomal subunits, but not 50S ribosomal subunits or 70S ribosomes.

The protein localises to the cytoplasm. Functionally, one of several proteins that assist in the late maturation steps of the functional core of the 30S ribosomal subunit. Associates with free 30S ribosomal subunits (but not with 30S subunits that are part of 70S ribosomes or polysomes). Required for efficient processing of 16S rRNA. May interact with the 5'-terminal helix region of 16S rRNA. This chain is Ribosome-binding factor A, found in Neisseria gonorrhoeae (strain NCCP11945).